The primary structure comprises 167 residues: Leptin (167 aa).

The signal sequence occupies residues 1-21 (MRCGSLCRFLWLWSCLSYIEA). A disulfide bridge connects residues Cys-117 and Cys-167.

It belongs to the leptin family.

Its subcellular location is the secreted. Its function is as follows. Key player in the regulation of energy balance and body weight control. Once released into the circulation, has central and peripheral effects by binding LEPR, found in many tissues, which results in the activation of several major signaling pathways. In the hypothalamus, acts as an appetite-regulating factor that induces a decrease in food intake and an increase in energy consumption by inducing anorexinogenic factors and suppressing orexigenic neuropeptides, also regulates bone mass and secretion of hypothalamo-pituitary-adrenal hormones. In the periphery, increases basal metabolism, influences reproductive function, regulates pancreatic beta-cell function and insulin secretion, is pro-angiogenic for endothelial cell and affects innate and adaptive immunity. In the arcuate nucleus of the hypothalamus, activates by depolarization POMC neurons inducing FOS and SOCS3 expression to release anorexigenic peptides and inhibits by hyperpolarization NPY neurons inducing SOCS3 with a consequent reduction on release of orexigenic peptides. In addition to its known satiety inducing effect, has a modulatory role in nutrient absorption. In the intestine, reduces glucose absorption by enterocytes by activating PKC and leading to a sequential activation of p38, PI3K and ERK signaling pathways which exerts an inhibitory effect on glucose absorption. Acts as a growth factor on certain tissues, through the activation of different signaling pathways increases expression of genes involved in cell cycle regulation such as CCND1, via JAK2-STAT3 pathway, or VEGFA, via MAPK1/3 and PI3K-AKT1 pathways. May also play an apoptotic role via JAK2-STAT3 pathway and up-regulation of BIRC5 expression. Pro-angiogenic, has mitogenic activity on vascular endothelial cells and plays a role in matrix remodeling by regulating the expression of matrix metalloproteinases (MMPs) and tissue inhibitors of metalloproteinases (TIMPs). In innate immunity, modulates the activity and function of neutrophils by increasing chemotaxis and the secretion of oxygen radicals. Increases phagocytosis by macrophages and enhances secretion of pro-inflammatory mediators. Increases cytotoxic ability of NK cells. Plays a pro-inflammatory role, in synergy with IL1B, by inducing NOS2 which promotes the production of IL6, IL8 and Prostaglandin E2, through a signaling pathway that involves JAK2, PI3K, MAP2K1/MEK1 and MAPK14/p38. In adaptive immunity, promotes the switch of memory T-cells towards T helper-1 cell immune responses. Increases CD4(+)CD25(-) T-cell proliferation and reduces autophagy during TCR (T-cell receptor) stimulation, through MTOR signaling pathway activation and BCL2 up-regulation. This Phoca vitulina (Harbor seal) protein is Leptin (LEP).